The sequence spans 512 residues: Protein spinster homolog 3 (512 aa).

The interval 1–30 (MAGGMSAECPEPGPGGLQGQSPGPGRQCPP) is disordered. 12 helical membrane-spanning segments follow: residues 50 to 70 (VLCYINLLNYMNWFIIAGVLL), 84 to 104 (GLLQTVFVSCLLLSAPVFGYL), 112 to 132 (ATMSFGILLWSGAGLSSSFIS), 145 to 165 (IVGTGSASYSTIAPTVLGDLF), 173 to 193 (VLAVFYIFIPVGSGLGYVLGS), 204 to 224 (WALRVMPCLEAVALILLILLV), 260 to 280 (FVWSTLGVTAMAFVTGALGFW), 309 to 329 (LIFGALTIMTGVIGVILGAEA), 343 to 365 (LICASSLLATAPCLYLALVLAPT), 377 to 397 (GELLLSCNWAVVADILLSVVV), 411 to 431 (VGHILGDAGSPYLTGLISSVL), and 450 to 470 (FLCCAFVIALGGGCFLLTALY). Residues 481–512 (PVTGTPDSNDVDSNDLERQGLLSGAGASTEEP) are disordered.

This sequence belongs to the major facilitator superfamily. Spinster (TC 2.A.1.49) family.

It localises to the membrane. Functionally, sphingolipid transporter. The polypeptide is Protein spinster homolog 3 (SPNS3) (Homo sapiens (Human)).